Reading from the N-terminus, the 1114-residue chain is Transcriptional repressor NF-X1 (1114 aa).

Positions 9–26 are interaction with PABPC1 and PABC4; the sequence is GTFKFNTDAAEFIPQERK. 3 disordered regions span residues 20-220, 232-287, and 299-325; these read FIPQ…CRKP, QRRY…PTKS, and KSSR…FPRG. S50, S81, S92, S126, S130, and S147 each carry phosphoserine. Composition is skewed to polar residues over residues 72–103 and 121–142; these read SYAS…NQPW and LSEQ…SGTN. Basic and acidic residues-rich tracts occupy residues 143-156, 185-202, 232-248, and 304-315; these read PREH…KEVV, LRSE…DENT, QRRY…EGAR, and VNQEKTAVRRQD. Position 320 is a phosphoserine (S320). An RING-type; atypical zinc finger spans residues 352-403; the sequence is CMVCCELVQVTAPVWSCQSCFHVFHLNCIKKWARSPASHADGQSGWRCPACQ. 8 NF-X1-type zinc fingers span residues 447–465, 500–519, 561–580, 626–649, 688–707, 715–734, 826–848, and 857–878; these read CPHS…PCPA, CGQH…PCRI, CGSH…PCPR, CGSS…PCSR, CGRH…KCPL, CGLH…TCWQ, CGMH…ACKQ, and CGHP…ACKA. Positions 988–1056 constitute an R3H domain; sequence LKFVSDVEKE…KRNVVVTAVR (69 aa). A disordered region spans residues 1071–1095; the sequence is ERETQTRPPPPIPHHRHQADKAPGS.

It belongs to the NFX1 family. In terms of assembly, interacts with PABPC1 and PABPC4. Ubiquitously expressed, with highest levels in thymus.

The protein resides in the nucleus. In terms of biological role, binds to the X-box motif of MHC class II genes and represses their expression. May play an important role in regulating the duration of an inflammatory response by limiting the period in which MHC class II molecules are induced by interferon-gamma. Together with PABPC1 or PABPC4, acts as a coactivator for TERT expression. Mediates E2-dependent ubiquitination. The chain is Transcriptional repressor NF-X1 (Nfx1) from Mus musculus (Mouse).